The chain runs to 434 residues: CinA-like protein (434 aa).

It belongs to the CinA family.

The polypeptide is CinA-like protein (Mycolicibacterium paratuberculosis (strain ATCC BAA-968 / K-10) (Mycobacterium paratuberculosis)).